The following is a 152-amino-acid chain: Large ribosomal subunit protein uL30 (152 aa).

It belongs to the universal ribosomal protein uL30 family. In terms of assembly, part of the 50S ribosomal subunit.

This Methanosphaera stadtmanae (strain ATCC 43021 / DSM 3091 / JCM 11832 / MCB-3) protein is Large ribosomal subunit protein uL30.